A 348-amino-acid chain; its full sequence is Methylthioribose-1-phosphate isomerase (348 aa).

Residues 53 to 55 (RGA), R93, and Q197 each bind substrate. D238 serves as the catalytic Proton donor. 248 to 249 (NK) serves as a coordination point for substrate.

It belongs to the eIF-2B alpha/beta/delta subunits family. MtnA subfamily.

It catalyses the reaction 5-(methylsulfanyl)-alpha-D-ribose 1-phosphate = 5-(methylsulfanyl)-D-ribulose 1-phosphate. The protein operates within amino-acid biosynthesis; L-methionine biosynthesis via salvage pathway; L-methionine from S-methyl-5-thio-alpha-D-ribose 1-phosphate: step 1/6. Catalyzes the interconversion of methylthioribose-1-phosphate (MTR-1-P) into methylthioribulose-1-phosphate (MTRu-1-P). In Gloeobacter violaceus (strain ATCC 29082 / PCC 7421), this protein is Methylthioribose-1-phosphate isomerase.